Here is a 242-residue protein sequence, read N- to C-terminus: MLTLGVNIDHVATIRQARQTVMEPDPIAAAVLAELAGADGITAHLREDRRHIQERDVEILRKTVRTHLNLEMAATKEMVEIALNLKPDYVTLVPERREEVTTEGGLDVAGNLNYLLGVVEQLQSRHIPVSLFIDPDVAQLKASAQTGAKFIELHTGKYANAPTADDQARELGSLAIACDIALELGLRINAGHGLTYWNVRPVAELPGMEELNIGHSIMSRAILVGMERAVREMKLAMLGLPF.

A 3-amino-2-oxopropyl phosphate-binding site is contributed by asparagine 7. Residue 9–10 (DH) participates in 1-deoxy-D-xylulose 5-phosphate binding. Arginine 18 is a 3-amino-2-oxopropyl phosphate binding site. Histidine 44 (proton acceptor) is an active-site residue. 2 residues coordinate 1-deoxy-D-xylulose 5-phosphate: arginine 46 and histidine 51. The active-site Proton acceptor is the glutamate 71. Threonine 101 serves as a coordination point for 1-deoxy-D-xylulose 5-phosphate. Residue histidine 192 is the Proton donor of the active site. Residues glycine 193 and 214–215 (GH) each bind 3-amino-2-oxopropyl phosphate.

Belongs to the PNP synthase family. As to quaternary structure, homooctamer; tetramer of dimers.

The protein resides in the cytoplasm. It carries out the reaction 3-amino-2-oxopropyl phosphate + 1-deoxy-D-xylulose 5-phosphate = pyridoxine 5'-phosphate + phosphate + 2 H2O + H(+). It functions in the pathway cofactor biosynthesis; pyridoxine 5'-phosphate biosynthesis; pyridoxine 5'-phosphate from D-erythrose 4-phosphate: step 5/5. Catalyzes the complicated ring closure reaction between the two acyclic compounds 1-deoxy-D-xylulose-5-phosphate (DXP) and 3-amino-2-oxopropyl phosphate (1-amino-acetone-3-phosphate or AAP) to form pyridoxine 5'-phosphate (PNP) and inorganic phosphate. This Synechocystis sp. (strain ATCC 27184 / PCC 6803 / Kazusa) protein is Pyridoxine 5'-phosphate synthase.